A 196-amino-acid polypeptide reads, in one-letter code: Ribonuclease HII (196 aa).

The RNase H type-2 domain maps to 15–196; it reads FILAGIDEAG…RLSFTKALYK (182 aa). A divalent metal cation-binding residues include D21, E22, and D112.

Belongs to the RNase HII family. Mn(2+) serves as cofactor. Mg(2+) is required as a cofactor.

The protein resides in the cytoplasm. It catalyses the reaction Endonucleolytic cleavage to 5'-phosphomonoester.. Endonuclease that specifically degrades the RNA of RNA-DNA hybrids. The protein is Ribonuclease HII of Rickettsia bellii (strain OSU 85-389).